The following is a 351-amino-acid chain: Phospho-N-acetylmuramoyl-pentapeptide-transferase (351 aa).

A run of 10 helical transmembrane segments spans residues 3-23 (GIIA…PPLI), 51-71 (TMGG…AHAV), 76-96 (PTVS…VGFL), 113-133 (GAKM…VTMF), 152-172 (FGPP…IVAT), 181-201 (GLDG…VIIG), 223-243 (PLDL…FLWF), 250-270 (IFMG…LAIT), 275-295 (LLLL…IIQV), and 329-349 (FWII…LEWM).

Belongs to the glycosyltransferase 4 family. MraY subfamily. Requires Mg(2+) as cofactor.

The protein resides in the cell membrane. The catalysed reaction is UDP-N-acetyl-alpha-D-muramoyl-L-alanyl-gamma-D-glutamyl-meso-2,6-diaminopimeloyl-D-alanyl-D-alanine + di-trans,octa-cis-undecaprenyl phosphate = di-trans,octa-cis-undecaprenyl diphospho-N-acetyl-alpha-D-muramoyl-L-alanyl-D-glutamyl-meso-2,6-diaminopimeloyl-D-alanyl-D-alanine + UMP. The protein operates within cell wall biogenesis; peptidoglycan biosynthesis. In terms of biological role, catalyzes the initial step of the lipid cycle reactions in the biosynthesis of the cell wall peptidoglycan: transfers peptidoglycan precursor phospho-MurNAc-pentapeptide from UDP-MurNAc-pentapeptide onto the lipid carrier undecaprenyl phosphate, yielding undecaprenyl-pyrophosphoryl-MurNAc-pentapeptide, known as lipid I. This is Phospho-N-acetylmuramoyl-pentapeptide-transferase from Thermobifida fusca (strain YX).